The chain runs to 179 residues: Cytochrome b6-f complex iron-sulfur subunit (179 aa).

The chain crosses the membrane as a helical span at residues 21-43 (LLTFGSVTGVALGALYPVVNYFI). The Rieske domain maps to 61 to 162 (GNDVVLSKFL…VSVTDDKVFL (102 aa)). Residues cysteine 108, histidine 110, cysteine 126, and histidine 129 each coordinate [2Fe-2S] cluster. Cysteine 113 and cysteine 128 are disulfide-bonded.

This sequence belongs to the Rieske iron-sulfur protein family. In terms of assembly, the 4 large subunits of the cytochrome b6-f complex are cytochrome b6, subunit IV (17 kDa polypeptide, PetD), cytochrome f and the Rieske protein, while the 4 small subunits are PetG, PetL, PetM and PetN. The complex functions as a dimer. It depends on [2Fe-2S] cluster as a cofactor.

The protein localises to the cellular thylakoid membrane. It catalyses the reaction 2 oxidized [plastocyanin] + a plastoquinol + 2 H(+)(in) = 2 reduced [plastocyanin] + a plastoquinone + 4 H(+)(out). Its function is as follows. Component of the cytochrome b6-f complex, which mediates electron transfer between photosystem II (PSII) and photosystem I (PSI), cyclic electron flow around PSI, and state transitions. This is Cytochrome b6-f complex iron-sulfur subunit from Synechococcus elongatus (strain ATCC 33912 / PCC 7942 / FACHB-805) (Anacystis nidulans R2).